The following is a 555-amino-acid chain: Hdr-like menaquinol oxidoreductase iron-sulfur subunit 2 (555 aa).

4Fe-4S ferredoxin-type domains follow at residues 82–111 (RSFKLFMDICVRCGACADKCHYYIGTGDPK) and 151–180 (KELYYYAYQCSLCRRCSLFCPYGIDTAEIV). [4Fe-4S] cluster-binding residues include C91, C94, C97, C101, C160, C163, C166, and C170.

Consists of five subunits: an integral membrane subunit, a cytochrome b-like subunit, a cytochrome c subunit and two iron-sulfur subunits. [4Fe-4S] cluster serves as cofactor.

The protein localises to the cell membrane. Has menaquinol-oxidizing activity. HmeC and HmeD subunits may together mediate electron transfer from menaquinol to an unidentified electron acceptor on the cytoplasmic side of the membrane. The polypeptide is Hdr-like menaquinol oxidoreductase iron-sulfur subunit 2 (hmeD) (Archaeoglobus fulgidus (strain ATCC 49558 / DSM 4304 / JCM 9628 / NBRC 100126 / VC-16)).